The chain runs to 224 residues: Synaptogyrin-2 (224 aa).

Met-1 is subject to N-acetylmethionine. The residue at position 3 (Ser-3) is a Phosphoserine. In terms of domain architecture, MARVEL spans 20-171; the sequence is FLTQPQVVAR…LASLAYQRYK (152 aa). 4 helical membrane-spanning segments follow: residues 26-46, 73-93, 105-125, and 147-167; these read VVAR…IYGE, AIGV…AYFP, VIGD…GFCF, and AAIT…SLAY.

It belongs to the synaptogyrin family. In terms of assembly, (Microbial infection) Interacts with SFTS phlebovirus protein NSs; may be involved in virus replication. In terms of processing, may be tyrosine phosphorylated by Src. Ubiquitous; low expression in brain.

Its subcellular location is the cytoplasmic vesicle membrane. It is found in the cytoplasmic vesicle. It localises to the secretory vesicle. The protein resides in the synaptic vesicle membrane. The protein localises to the lipid droplet. Its function is as follows. May play a role in regulated exocytosis. In neuronal cells, modulates the localization of synaptophysin/SYP into synaptic-like microvesicles and may therefore play a role in the formation and/or the maturation of this vesicles. May also play a role in GLUT4 storage and transport to the plasma membrane. In terms of biological role, (Microbial infection) May play a role in the assembly of cytoplasmic inclusion bodies required for SFTS phlebovirus replication. The chain is Synaptogyrin-2 from Homo sapiens (Human).